Reading from the N-terminus, the 503-residue chain is Glycoprotein 3-alpha-L-fucosyltransferase A (503 aa).

The Cytoplasmic portion of the chain corresponds to 1–10 (MRRPKISLKK). The chain crosses the membrane as a helical; Signal-anchor for type II membrane protein span at residues 11-28 (YFYLTLICALLLIFGFSL). Over 29 to 503 (KEREIWKTLS…KDVISDSSDD (475 aa)) the chain is Lumenal. The disordered stretch occupies residues 44–71 (ITTQQQQHQHLHQLQSMDEEHPMATSST). Residues 47 to 58 (QQQQHQHLHQLQ) are compositionally biased toward low complexity. 3 N-linked (GlcNAc...) asparagine glycosylation sites follow: asparagine 262, asparagine 295, and asparagine 299.

The protein belongs to the glycosyltransferase 10 family. It depends on Mn(2+) as a cofactor.

It localises to the golgi apparatus. The protein localises to the golgi stack membrane. It carries out the reaction N(4)-{beta-D-GlcNAc-(1-&gt;2)-alpha-D-Man-(1-&gt;3)-[beta-D-GlcNAc-(1-&gt;2)-alpha-D-Man-(1-&gt;6)]-beta-D-Man-(1-&gt;4)-beta-D-GlcNAc-(1-&gt;4)-beta-D-GlcNAc}-L-asparaginyl-[protein] + GDP-beta-L-fucose = N(4)-{beta-D-GlcNAc-(1-&gt;2)-alpha-D-Man-(1-&gt;3)-[beta-D-GlcNAc-(1-&gt;2)-alpha-D-Man-(1-&gt;6)]-beta-D-Man-(1-&gt;4)-beta-D-GlcNAc-(1-&gt;4)-[alpha-L-Fuc(1-&gt;3)]-beta-D-GlcNAc}-L-asparaginyl-[protein] + GDP + H(+). It participates in protein modification; protein glycosylation. Catalyzes alpha-1,3 glycosidic linkages of N-glycans. Plays a role in neuronal development by promoting ventral nerve cord formation, possibly by promoting interactions between migrating cells and the extracellular matrix or by promoting neural activity. The polypeptide is Glycoprotein 3-alpha-L-fucosyltransferase A (FucTA) (Drosophila melanogaster (Fruit fly)).